An 801-amino-acid polypeptide reads, in one-letter code: Zinc finger Y-chromosomal protein (801 aa).

The residue at position 270 (S270) is a Phosphoserine. A C2H2-type 1 zinc finger spans residues 421–443; the sequence is YPCMICGKKFKSRGFLKRHMKNH. A C2H2-type 2; atypical zinc finger spans residues 452-474; that stretch reads YHCTDCDYTTNKKISLHNHLESH. 11 consecutive C2H2-type zinc fingers follow at residues 484 to 506, 515 to 538, 544 to 566, 572 to 595, 601 to 623, 629 to 652, 658 to 680, 686 to 709, 715 to 737, 743 to 766, and 772 to 795; these read IECD…KMVH, HKCK…LAVH, HICV…MRIH, YQCQ…KTKH, FKCD…TLVH, HQCL…ISVH, HKCE…VAVH, HQCR…LSVH, FRCK…MKTH, YQCE…ISIH, and HRCE…MRHH.

Belongs to the krueppel C2H2-type zinc-finger protein family. ZFX/ZFY subfamily.

Its subcellular location is the nucleus. Probable transcriptional activator. Binds to the consensus sequence 5'-AGGCCY-3'. The protein is Zinc finger Y-chromosomal protein (ZFY) of Homo sapiens (Human).